Consider the following 368-residue polypeptide: Isopentenyl-diphosphate delta-isomerase (368 aa).

7–8 (RK) lines the substrate pocket. FMN-binding positions include threonine 65, 66–68 (GMT), serine 96, and asparagine 125. Residue 96–98 (SQR) participates in substrate binding. Glutamine 160 contributes to the substrate binding site. Position 161 (glutamate 161) interacts with Mg(2+). Residues lysine 193, serine 218, threonine 223, 275 to 277 (GIR), and 296 to 297 (AL) each bind FMN.

Belongs to the IPP isomerase type 2 family. In terms of assembly, homooctamer. Dimer of tetramers. FMN serves as cofactor. NADPH is required as a cofactor. It depends on Mg(2+) as a cofactor.

It localises to the cytoplasm. The enzyme catalyses isopentenyl diphosphate = dimethylallyl diphosphate. In terms of biological role, involved in the biosynthesis of isoprenoids. Catalyzes the 1,3-allylic rearrangement of the homoallylic substrate isopentenyl (IPP) to its allylic isomer, dimethylallyl diphosphate (DMAPP). This Saccharolobus islandicus (strain L.S.2.15 / Lassen #1) (Sulfolobus islandicus) protein is Isopentenyl-diphosphate delta-isomerase.